A 511-amino-acid chain; its full sequence is Lariat debranching enzyme (511 aa).

The a divalent metal cation site is built by cysteine 52, histidine 54, aspartate 83, and asparagine 128. The interval 168 to 198 (SGIYSHGDVEFSHYERPAFAERDVKSAYHVR) is lariat recognition loop. Residues histidine 226, histidine 278, and histidine 280 each contribute to the a divalent metal cation site. A disordered region spans residues 473 to 511 (EDDFIIDRGHGSEEPEAKKSRLEEEKKKKKKKIENLKTL). Residues 477–498 (IIDRGHGSEEPEAKKSRLEEEK) show a composition bias toward basic and acidic residues.

Belongs to the lariat debranching enzyme family. Fe(2+) is required as a cofactor. The cofactor is Zn(2+). Requires Mn(2+) as cofactor.

The protein localises to the nucleus. Active in presence of diverse metals including Fe(2+), Zn(2+), Mn(2+). Binds two metal cations in two adjacent alpha and beta metal-binding pockets. Its function is as follows. Cleaves the 2'-5' phosphodiester linkage at the branch point of lariat intron pre-mRNAs after splicing and converts them into linear molecules that are subsequently degraded. It thereby facilitates ribonucleotide turnover. This chain is Lariat debranching enzyme (dbr-1), found in Caenorhabditis briggsae.